A 90-amino-acid polypeptide reads, in one-letter code: Probable Fe(2+)-trafficking protein (90 aa).

Belongs to the Fe(2+)-trafficking protein family.

Functionally, could be a mediator in iron transactions between iron acquisition and iron-requiring processes, such as synthesis and/or repair of Fe-S clusters in biosynthetic enzymes. The chain is Probable Fe(2+)-trafficking protein from Pseudomonas fluorescens (strain ATCC BAA-477 / NRRL B-23932 / Pf-5).